Reading from the N-terminus, the 218-residue chain is Large ribosomal subunit protein bL25 (218 aa).

The disordered stretch occupies residues 197-218 (PAEESGEKPVAHIEEKESTEKE). Residues 201 to 218 (SGEKPVAHIEEKESTEKE) are compositionally biased toward basic and acidic residues.

It belongs to the bacterial ribosomal protein bL25 family. CTC subfamily. In terms of assembly, part of the 50S ribosomal subunit; part of the 5S rRNA/L5/L18/L25 subcomplex. Contacts the 5S rRNA. Binds to the 5S rRNA independently of L5 and L18.

Functionally, this is one of the proteins that binds to the 5S RNA in the ribosome where it forms part of the central protuberance. The protein is Large ribosomal subunit protein bL25 of Dehalococcoides mccartyi (strain ATCC BAA-2100 / JCM 16839 / KCTC 5957 / BAV1).